Here is a 1525-residue protein sequence, read N- to C-terminus: Receptor-type guanylate cyclase Gyc76C (1525 aa).

The first 19 residues, 1 to 19 (MTRWPFNLLLLLSVAVRDC), serve as a signal peptide directing secretion. The Extracellular segment spans residues 20 to 493 (SNHRTVLTVG…KKDDTHYTST (474 aa)). 9 N-linked (GlcNAc...) asparagine glycosylation sites follow: asparagine 74, asparagine 184, asparagine 222, asparagine 338, asparagine 383, asparagine 394, asparagine 416, asparagine 428, and asparagine 458. The helical transmembrane segment at 494-514 (VAAVVLGVLLFCSGVITMSIY) threads the bilayer. The Cytoplasmic segment spans residues 515 to 1525 (RKWKIELEIE…AAARDRESIV (1011 aa)). Positions 547–824 (PSKVSLMSAQ…SVIRNRLKKM (278 aa)) constitute a Protein kinase domain. ATP-binding positions include 553-561 (MSAQSYGSR) and lysine 581. Positions 896–1026 (TIYFSDIVGF…DTVNTASRME (131 aa)) constitute a Guanylate cyclase domain. The Mg(2+) site is built by aspartate 901, isoleucine 902, and aspartate 945. 3 disordered regions span residues 1122–1168 (GSRR…NGLG), 1192–1217 (ETNETNCDMDGGSGGVSGSGSGLVRQ), and 1256–1308 (ESRS…VHSS). Over residues 1147-1162 (ESPRMVSKRDRDRERP) the composition is skewed to basic and acidic residues. The segment covering 1202 to 1212 (GGSGGVSGSGS) has biased composition (gly residues). Residues 1282 to 1308 (LSKNNSRSLDTGVSLISGNPNGEVHSS) show a composition bias toward polar residues.

It belongs to the adenylyl cyclase class-4/guanylyl cyclase family. In terms of assembly, interacts with the semaphorin 1A receptor PlexA; PlexA enhances Gyc76C catalytic activity. Interacts with the PDZ domain-containing protein kermit; kermit increases cell surface expression of Gyc76C. In terms of tissue distribution, in the adult, widely distributed in the head and thorax with highest levels in the optic lobe and central brain and expression also detected in the retina. Expressed at similar levels in adult head and body. In females, highly expressed in oocytes with lower levels in the digestive tract. In mid-embryogenesis, enriched in the circular visceral mesoderm that overlies the migrating salivary gland and in the fat body that underlies the gland but at background levels in the gland itself. In late embryogenesis, detected in the mature salivary gland, in the somatic body wall muscles and the tendon cells to which the muscles attach, and in the constricting midgut. Also expressed in migrating tracheal cells at mid-embryogenesis and in the developed trachea at the end of embryogenesis with enrichment in the apical domains.

Its subcellular location is the cell membrane. It carries out the reaction GTP = 3',5'-cyclic GMP + diphosphate. Its function is as follows. Guanylate cyclase involved in the production of the second messenger cGMP. Acts as a receptor for the NPLP1-4 peptide and modulates the innate immune IMD pathway in response to salt stress by inducing nuclear translocation of NF-kappa-B protein Rel which leads to increased expression of the antimicrobial peptide diptericin. Plays a role in Sema-1a-mediated axon repulsion which is required for the correct establishment of neuromuscular connectivity. Required in developing embryonic somatic muscle for correct patterning of ventral and lateral muscles and for localization of integrin beta-ps at developing dorsal muscle myotendinous junctions. Required for invagination, migration and lumen shape of the embryonic salivary gland by regulating the localization of the integrin-binding protein rhea/Talin to the visceral mesoderm surrounding the gland and maintaining the laminin matrix. Required in the developing wing to regulate extracellular matrix (ECM) organization by activating the cGMP-dependent protein kinase For which represses the activity of matrix metalloproteases such as Mmp2 and decreases ECM matrix reorganization. The protein is Receptor-type guanylate cyclase Gyc76C of Drosophila melanogaster (Fruit fly).